A 61-amino-acid polypeptide reads, in one-letter code: Large ribosomal subunit protein bL28 (61 aa).

The segment at 1 to 26 (MAKDFVTGKHTRFGNTRSHALNHSRR) is disordered.

This sequence belongs to the bacterial ribosomal protein bL28 family.

The protein is Large ribosomal subunit protein bL28 of Pediococcus pentosaceus (strain ATCC 25745 / CCUG 21536 / LMG 10740 / 183-1w).